A 223-amino-acid chain; its full sequence is Ribosome maturation factor RimM (223 aa).

Positions 142 to 223 (ADEFYWVDLI…RIVVDWEADY (82 aa)) constitute a PRC barrel domain.

This sequence belongs to the RimM family. As to quaternary structure, binds ribosomal protein uS19.

The protein localises to the cytoplasm. An accessory protein needed during the final step in the assembly of 30S ribosomal subunit, possibly for assembly of the head region. Essential for efficient processing of 16S rRNA. May be needed both before and after RbfA during the maturation of 16S rRNA. It has affinity for free ribosomal 30S subunits but not for 70S ribosomes. The protein is Ribosome maturation factor RimM of Burkholderia multivorans (strain ATCC 17616 / 249).